Here is a 428-residue protein sequence, read N- to C-terminus: GTPase Obg (428 aa).

Positions Met1 to Leu158 constitute an Obg domain. Residues Ala159–Glu329 enclose the OBG-type G domain. Residues Gly165–Ser172, Phe190–Val194, Asp212–Gly215, Asn282–Asp285, and Ser310–Val312 contribute to the GTP site. 2 residues coordinate Mg(2+): Ser172 and Thr192. The OCT domain occupies Lys350–Asp428.

The protein belongs to the TRAFAC class OBG-HflX-like GTPase superfamily. OBG GTPase family. Monomer. The cofactor is Mg(2+).

Its subcellular location is the cytoplasm. Functionally, an essential GTPase which binds GTP, GDP and possibly (p)ppGpp with moderate affinity, with high nucleotide exchange rates and a fairly low GTP hydrolysis rate. Plays a role in control of the cell cycle, stress response, ribosome biogenesis and in those bacteria that undergo differentiation, in morphogenesis control. In Bacillus anthracis, this protein is GTPase Obg.